The following is a 426-amino-acid chain: Glutamate-1-semialdehyde 2,1-aminomutase (426 aa).

Lys-265 carries the N6-(pyridoxal phosphate)lysine modification.

It belongs to the class-III pyridoxal-phosphate-dependent aminotransferase family. HemL subfamily. Homodimer. It depends on pyridoxal 5'-phosphate as a cofactor.

The protein localises to the cytoplasm. The catalysed reaction is (S)-4-amino-5-oxopentanoate = 5-aminolevulinate. It participates in porphyrin-containing compound metabolism; protoporphyrin-IX biosynthesis; 5-aminolevulinate from L-glutamyl-tRNA(Glu): step 2/2. The polypeptide is Glutamate-1-semialdehyde 2,1-aminomutase (Klebsiella pneumoniae subsp. pneumoniae (strain ATCC 700721 / MGH 78578)).